Reading from the N-terminus, the 142-residue chain is AP-2 complex subunit sigma (142 aa).

Belongs to the adaptor complexes small subunit family. Adaptor protein complex 2 (AP-2) is a heterotetramer composed of two large adaptins (alpha-type and beta-type subunits), a medium adaptin (mu-type subunit) and a small adaptin (sigma-type subunit).

The protein localises to the cell membrane. Its subcellular location is the membrane. It localises to the coated pit. In terms of biological role, subunit of the adaptor protein complex 2 (AP-2). Adaptor protein complexes function in protein transport via transport vesicles in different membrane traffic pathways. Adaptor protein complexes are vesicle coat components and appear to be involved in cargo selection and vesicle formation. AP-2 is involved in clathrin-dependent endocytosis in which cargo proteins are incorporated into vesicles surrounded by clathrin (clathrin-coated vesicles, CCVs) which are destined for fusion with the early endosome. The complex binds polyphosphoinositides. This Arabidopsis thaliana (Mouse-ear cress) protein is AP-2 complex subunit sigma (AP17).